The primary structure comprises 313 residues: Protoheme IX farnesyltransferase (313 aa).

9 helical membrane-spanning segments follow: residues 29 to 49 (VISLLLWTTVTAMFMAARGWP), 57 to 77 (LWLLIVVSVAGYMSAGSAGVF), 101 to 123 (LISSRNAAIFGTTLQVLSFVMLW), 124 to 144 (VWGTPLAAWMSLAGFVFYVVI), 157 to 177 (IVIGGAAGCFPPLVGWAAVTG), 185 to 205 (YLFAIIFFWTPVHFWALALMI), 225 to 245 (MTVAQIGLYAIYTVVLSLMPV), 247 to 267 (FGAVSWIYFVSGALLGAWLLW), and 287 to 307 (AVPLYLYSMLYLALLFLAGAI).

This sequence belongs to the UbiA prenyltransferase family. Protoheme IX farnesyltransferase subfamily.

It is found in the cell membrane. The enzyme catalyses heme b + (2E,6E)-farnesyl diphosphate + H2O = Fe(II)-heme o + diphosphate. The protein operates within porphyrin-containing compound metabolism; heme O biosynthesis; heme O from protoheme: step 1/1. Functionally, converts heme B (protoheme IX) to heme O by substitution of the vinyl group on carbon 2 of heme B porphyrin ring with a hydroxyethyl farnesyl side group. The sequence is that of Protoheme IX farnesyltransferase from Deinococcus radiodurans (strain ATCC 13939 / DSM 20539 / JCM 16871 / CCUG 27074 / LMG 4051 / NBRC 15346 / NCIMB 9279 / VKM B-1422 / R1).